The sequence spans 175 residues: Crossover junction endodeoxyribonuclease RuvC (175 aa).

Active-site residues include D8, E69, and D141. Residues D8, E69, and D141 each contribute to the Mg(2+) site.

This sequence belongs to the RuvC family. As to quaternary structure, homodimer which binds Holliday junction (HJ) DNA. The HJ becomes 2-fold symmetrical on binding to RuvC with unstacked arms; it has a different conformation from HJ DNA in complex with RuvA. In the full resolvosome a probable DNA-RuvA(4)-RuvB(12)-RuvC(2) complex forms which resolves the HJ. Requires Mg(2+) as cofactor.

It localises to the cytoplasm. It carries out the reaction Endonucleolytic cleavage at a junction such as a reciprocal single-stranded crossover between two homologous DNA duplexes (Holliday junction).. Functionally, the RuvA-RuvB-RuvC complex processes Holliday junction (HJ) DNA during genetic recombination and DNA repair. Endonuclease that resolves HJ intermediates. Cleaves cruciform DNA by making single-stranded nicks across the HJ at symmetrical positions within the homologous arms, yielding a 5'-phosphate and a 3'-hydroxyl group; requires a central core of homology in the junction. The consensus cleavage sequence is 5'-(A/T)TT(C/G)-3'. Cleavage occurs on the 3'-side of the TT dinucleotide at the point of strand exchange. HJ branch migration catalyzed by RuvA-RuvB allows RuvC to scan DNA until it finds its consensus sequence, where it cleaves and resolves the cruciform DNA. This is Crossover junction endodeoxyribonuclease RuvC from Colwellia psychrerythraea (strain 34H / ATCC BAA-681) (Vibrio psychroerythus).